We begin with the raw amino-acid sequence, 676 residues long: DNA ligase (676 aa).

NAD(+) contacts are provided by residues 34-38 (DAEYD), 84-85 (SL), and Glu116. Catalysis depends on Lys118, which acts as the N6-AMP-lysine intermediate. NAD(+)-binding residues include Arg139, Glu174, Lys294, and Lys318. Zn(2+)-binding residues include Cys412, Cys415, Cys428, and Cys433. A BRCT domain is found at 589–676 (KGGEALKGLT…RTGKKAEELV (88 aa)).

The protein belongs to the NAD-dependent DNA ligase family. LigA subfamily. Mg(2+) serves as cofactor. Mn(2+) is required as a cofactor.

The catalysed reaction is NAD(+) + (deoxyribonucleotide)n-3'-hydroxyl + 5'-phospho-(deoxyribonucleotide)m = (deoxyribonucleotide)n+m + AMP + beta-nicotinamide D-nucleotide.. Its function is as follows. DNA ligase that catalyzes the formation of phosphodiester linkages between 5'-phosphoryl and 3'-hydroxyl groups in double-stranded DNA using NAD as a coenzyme and as the energy source for the reaction. It is essential for DNA replication and repair of damaged DNA. This chain is DNA ligase, found in Thermus thermophilus (strain ATCC BAA-163 / DSM 7039 / HB27).